Reading from the N-terminus, the 364-residue chain is Ribosomal RNA large subunit methyltransferase M (364 aa).

Residues S187, 220 to 223 (CPGG), D239, D259, and D276 contribute to the S-adenosyl-L-methionine site. Catalysis depends on K305, which acts as the Proton acceptor.

The protein belongs to the class I-like SAM-binding methyltransferase superfamily. RNA methyltransferase RlmE family. RlmM subfamily. Monomer.

It is found in the cytoplasm. It catalyses the reaction cytidine(2498) in 23S rRNA + S-adenosyl-L-methionine = 2'-O-methylcytidine(2498) in 23S rRNA + S-adenosyl-L-homocysteine + H(+). Its function is as follows. Catalyzes the 2'-O-methylation at nucleotide C2498 in 23S rRNA. In Aeromonas hydrophila subsp. hydrophila (strain ATCC 7966 / DSM 30187 / BCRC 13018 / CCUG 14551 / JCM 1027 / KCTC 2358 / NCIMB 9240 / NCTC 8049), this protein is Ribosomal RNA large subunit methyltransferase M.